The primary structure comprises 207 residues: Large ribosomal subunit protein uL4 (207 aa).

The tract at residues 48 to 87 (THAVKNRSAVSGGGKKPWRQKGTGRARQGSIRSPQFRGGG) is disordered.

It belongs to the universal ribosomal protein uL4 family. As to quaternary structure, part of the 50S ribosomal subunit.

Functionally, one of the primary rRNA binding proteins, this protein initially binds near the 5'-end of the 23S rRNA. It is important during the early stages of 50S assembly. It makes multiple contacts with different domains of the 23S rRNA in the assembled 50S subunit and ribosome. Forms part of the polypeptide exit tunnel. This Limosilactobacillus reuteri subsp. reuteri (strain JCM 1112) (Lactobacillus reuteri) protein is Large ribosomal subunit protein uL4.